The chain runs to 84 residues: Large ribosomal subunit protein bL31B (84 aa).

Belongs to the bacterial ribosomal protein bL31 family. Type B subfamily. As to quaternary structure, part of the 50S ribosomal subunit.

In Phocaeicola vulgatus (strain ATCC 8482 / DSM 1447 / JCM 5826 / CCUG 4940 / NBRC 14291 / NCTC 11154) (Bacteroides vulgatus), this protein is Large ribosomal subunit protein bL31B.